The primary structure comprises 820 residues: Trimethylamine-N-oxide reductase (820 aa).

The segment at residues 1-33 is a signal peptide (tat-type signal); sequence MAITRRSFLKGVATTSAASVIGPSLLASASANA. A Mo-bis(molybdopterin guanine dinucleotide)-binding site is contributed by Ser179.

This sequence belongs to the prokaryotic molybdopterin-containing oxidoreductase family. The cofactor is Mo-bis(molybdopterin guanine dinucleotide). Predicted to be exported by the Tat system. The position of the signal peptide cleavage has not been experimentally proven.

The protein resides in the periplasm. The catalysed reaction is trimethylamine + 2 Fe(III)-[cytochrome c] + H2O = trimethylamine N-oxide + 2 Fe(II)-[cytochrome c] + 3 H(+). Functionally, reduces trimethylamine-N-oxide (TMAO) into trimethylamine; an anaerobic reaction coupled to energy-yielding reactions. The polypeptide is Trimethylamine-N-oxide reductase (torA) (Vibrio vulnificus (strain CMCP6)).